The primary structure comprises 37 residues: Large ribosomal subunit protein bL36 (37 aa).

The protein belongs to the bacterial ribosomal protein bL36 family.

This Geobacter metallireducens (strain ATCC 53774 / DSM 7210 / GS-15) protein is Large ribosomal subunit protein bL36.